Here is a 1079-residue protein sequence, read N- to C-terminus: Psi-producing oxygenase A (1079 aa).

The linoleate 8R-lipoxygenase stretch occupies residues 105–446; sequence TNTFLTTLWN…DGSYDDNDLV (342 aa). Heme b is bound at residue histidine 202. The active site involves tyrosine 374. A heme b-binding site is contributed by histidine 377. Positions 654–1079 are 9,12-octadecadienoate 8-hydroperoxide 8R-isomerase; it reads QFINSHSACM…WDGDLPEVKE (426 aa).

It belongs to the peroxidase family. Homotetramer. Heme b serves as cofactor.

It catalyses the reaction (9Z,12Z)-octadecadienoate + O2 = (8R,9Z,12Z)-8-hydroperoxyoctadeca-9,12-dienoate. It carries out the reaction (8R,9Z,12Z)-8-hydroperoxyoctadeca-9,12-dienoate = (5S,8R,9Z,12Z)-5,8-dihydroxyoctadeca-9,12-dienoate. In terms of biological role, bifunctional heme-containing enzyme that oxidizes linoleic acid to (8R,9Z,12Z)-8-hydroperoxyoctadeca-9,12-dienoate (within the N-terminal heme peroxidase domain), which is subsequently isomerized to (5S,8R,9Z,12Z)-5,8-dihydroxyoctadeca-9,12-dienoate (within the C-terminal P450 heme thiolate domain). Oxidized unsaturated fatty acids, so-called oxylipins, derived from endogenous fatty acids, influence the development of the asexual conidiophores and sexual cleistothecia and regulate the secondary metabolism. These substances were collectively named psi factors and are primarily a mixture of hydroxylated oleic, linoleic and alpha-linolenic acids. They are termed psi-beta, psi-alpha, and psi-gamma, respectively. Oxylipins may also serve as activators of mammalian immune responses contributing to enhanced resistance to opportunistic fungi and as factors that modulate fungal development contributing to resistance to host defenses. This chain is Psi-producing oxygenase A (ppoA), found in Aspergillus fumigatus (strain CBS 144.89 / FGSC A1163 / CEA10) (Neosartorya fumigata).